Reading from the N-terminus, the 558-residue chain is Urocanate hydratase (558 aa).

NAD(+) contacts are provided by residues 50–51 (GG), Gln-128, 174–176 (GMG), Glu-194, Arg-199, 240–241 (NA), 261–265 (QTSAH), 271–272 (YI), and Tyr-320. Cys-408 is an active-site residue. Position 490 (Gly-490) interacts with NAD(+).

The protein belongs to the urocanase family. Requires NAD(+) as cofactor.

It localises to the cytoplasm. It catalyses the reaction 4-imidazolone-5-propanoate = trans-urocanate + H2O. It functions in the pathway amino-acid degradation; L-histidine degradation into L-glutamate; N-formimidoyl-L-glutamate from L-histidine: step 2/3. Its function is as follows. Catalyzes the conversion of urocanate to 4-imidazolone-5-propionate. The chain is Urocanate hydratase from Deinococcus radiodurans (strain ATCC 13939 / DSM 20539 / JCM 16871 / CCUG 27074 / LMG 4051 / NBRC 15346 / NCIMB 9279 / VKM B-1422 / R1).